A 305-amino-acid chain; its full sequence is MKRPDLSVEIAGIKLRNPVMTASGTFGYGEEFAAYVNLEKIGAIITKGLSLKPKAGNPTPRIQETTGGMLNAIGLQNVGIDAFIEKKVPFLRTVNTPAIVNFFGNTVEEYAELAERLDKIPEVAGMEINISCPNVKHGGIVFGTEPKAAYSVVKAVREATIKPVIVKLSPNVTDIVEMAWACADAEADALSLINTLTGMAIDLKSRRPILANVTGGLSGPAVKPVALRMVWQVAKAVKIPVIGIGGIMSGTDALEFMLAGATAVQVGTANFLDPAASERIAAEMEQYLVNNGITDVKELIGALQV.

FMN-binding positions include S23 and 47–48; that span reads KG. Substrate contacts are provided by residues K47 and 71-75; that span reads NAIGL. Residues N101 and N129 each coordinate FMN. N129 is a substrate binding site. C132 functions as the Nucleophile in the catalytic mechanism. FMN-binding residues include K167 and I193. A substrate-binding site is contributed by 194–195; the sequence is NT. FMN contacts are provided by residues G219, 245–246, and 267–268; these read GG and GT.

The protein belongs to the dihydroorotate dehydrogenase family. Type 1 subfamily. As to quaternary structure, heterotetramer of 2 PyrK and 2 PyrD type B subunits. Requires FMN as cofactor.

Its subcellular location is the cytoplasm. The enzyme catalyses (S)-dihydroorotate + NAD(+) = orotate + NADH + H(+). It functions in the pathway pyrimidine metabolism; UMP biosynthesis via de novo pathway; orotate from (S)-dihydroorotate (NAD(+) route): step 1/1. In terms of biological role, catalyzes the conversion of dihydroorotate to orotate with NAD(+) as electron acceptor. This Geobacter metallireducens (strain ATCC 53774 / DSM 7210 / GS-15) protein is Dihydroorotate dehydrogenase B (NAD(+)), catalytic subunit (pyrD).